The chain runs to 138 residues: ATP synthase epsilon chain (138 aa).

The segment at 88–119 is disordered; that stretch reads DREEARSTLSAAQARLDQSEQSEDKQERYEAQ. The segment covering 109–119 has biased composition (basic and acidic residues); that stretch reads SEDKQERYEAQ.

Belongs to the ATPase epsilon chain family. In terms of assembly, F-type ATPases have 2 components, CF(1) - the catalytic core - and CF(0) - the membrane proton channel. CF(1) has five subunits: alpha(3), beta(3), gamma(1), delta(1), epsilon(1). CF(0) has three main subunits: a, b and c.

The protein localises to the cellular thylakoid membrane. Its function is as follows. Produces ATP from ADP in the presence of a proton gradient across the membrane. In Acaryochloris marina (strain MBIC 11017), this protein is ATP synthase epsilon chain.